A 129-amino-acid chain; its full sequence is NADPH-dependent 7-cyano-7-deazaguanine reductase (129 aa).

The active-site Thioimide intermediate is cysteine 34. Aspartate 41 functions as the Proton donor in the catalytic mechanism. Residues 56-58 and 75-76 contribute to the substrate site; these read VEL and HE.

Belongs to the GTP cyclohydrolase I family. QueF type 1 subfamily.

Its subcellular location is the cytoplasm. It catalyses the reaction 7-aminomethyl-7-carbaguanine + 2 NADP(+) = 7-cyano-7-deazaguanine + 2 NADPH + 3 H(+). It participates in tRNA modification; tRNA-queuosine biosynthesis. Functionally, catalyzes the NADPH-dependent reduction of 7-cyano-7-deazaguanine (preQ0) to 7-aminomethyl-7-deazaguanine (preQ1). This is NADPH-dependent 7-cyano-7-deazaguanine reductase from Alkalilimnicola ehrlichii (strain ATCC BAA-1101 / DSM 17681 / MLHE-1).